Reading from the N-terminus, the 537-residue chain is MGISKPLPLFSILVLYFSLYTITPTSSLASLQDQFINCVQRNTHVYFPLEKTFFAPTKNVSMFSQVLESTAQNLRFLKKSMPKPGFIFSPIHESHVQASIICSKKLRMHLRVRSGGHDYEGLSYVSQIDKPFILMDLSKMRQVNINIQDNSAWVQSGATVGELYYRIAEKSKVHGFPAGLCSSLGIGGHITGGAYGSMMRKYGLGADNVLDAKIVDANGKLLDRAAMGEDTFWAIRGGAGGSFGIILAWKIKLVPVPKTVTVFTVTKTLQQDVGNKIISKWQRVADKLVEELFIRVLFNVAGTGGNKTVTTSYNALFLGGKGTLMNVMKKSFPELGLTFKDCIEMSWLESIAYISGFPTHTPTNVLLQGKSPFPKVSFKAKSDFVKTPIPESGLQGIFKKLLKEDIPLMIWNPYGGMMAKIPESQIPFPHRKGVLFKVQYVTSWLDSDKRPSRHINWIRDLYSYMTPYVSSNPREAYVNYRDLDLGRNTKDVKTCIKQAQVWGANYFKNNFNRLMMIKAKVDPENFFRHEQSIPPMM.

The signal sequence occupies residues 1 to 27 (MGISKPLPLFSILVLYFSLYTITPTSS). C38 and C102 are joined by a disulfide. N59 carries N-linked (GlcNAc...) asparagine glycosylation. In terms of domain architecture, FAD-binding PCMH-type spans 80-256 (SMPKPGFIFS…LAWKIKLVPV (177 aa)). The 6-(S-cysteinyl)-8alpha-(pros-histidyl)-FAD (His-Cys) cross-link spans 117–181 (HDYEGLSYVS…KVHGFPAGLC (65 aa)). Residue N306 is glycosylated (N-linked (GlcNAc...) asparagine).

It belongs to the oxygen-dependent FAD-linked oxidoreductase family. FAD is required as a cofactor. In terms of processing, the FAD cofactor is bound via a bicovalent 6-S-cysteinyl, 8alpha-N1-histidyl FAD linkage.

The protein localises to the secreted. It localises to the cell wall. The chain is Berberine bridge enzyme-like 26 from Arabidopsis thaliana (Mouse-ear cress).